The primary structure comprises 299 residues: MLDRIKLGLNHILPKKALTELAGWGAGKRGGRLTKAVIDAFVWYYKVDMKEAQKPDTASYRTFNDFFVRPLRDEARPIETDPNQLVLPADGAISQLGPIEGDQIFQAKGHTYSLEALLAGNAAMTDMFRDGEFVTTYLAPRDYHRVHMPCNGILREMIYVPGDLYSVNPLTAQNIPNLFARNERVICRFDTEFGPMVQILVGATIVGSIETVWSGTVTPPREGVIKRWSWPGADEEGAVVLLKGQEMGRFKLGSTVINLFAPGKVKLAESLTAGSQTRLGATLATALQKESAEDVLHHP.

Catalysis depends on charge relay system; for autoendoproteolytic cleavage activity residues aspartate 90, histidine 147, and serine 254. Residue serine 254 is the Schiff-base intermediate with substrate; via pyruvic acid; for decarboxylase activity of the active site. At serine 254 the chain carries Pyruvic acid (Ser); by autocatalysis.

It belongs to the phosphatidylserine decarboxylase family. PSD-B subfamily. Prokaryotic type I sub-subfamily. Heterodimer of a large membrane-associated beta subunit and a small pyruvoyl-containing alpha subunit. Requires pyruvate as cofactor. In terms of processing, is synthesized initially as an inactive proenzyme. Formation of the active enzyme involves a self-maturation process in which the active site pyruvoyl group is generated from an internal serine residue via an autocatalytic post-translational modification. Two non-identical subunits are generated from the proenzyme in this reaction, and the pyruvate is formed at the N-terminus of the alpha chain, which is derived from the carboxyl end of the proenzyme. The autoendoproteolytic cleavage occurs by a canonical serine protease mechanism, in which the side chain hydroxyl group of the serine supplies its oxygen atom to form the C-terminus of the beta chain, while the remainder of the serine residue undergoes an oxidative deamination to produce ammonia and the pyruvoyl prosthetic group on the alpha chain. During this reaction, the Ser that is part of the protease active site of the proenzyme becomes the pyruvoyl prosthetic group, which constitutes an essential element of the active site of the mature decarboxylase.

It is found in the cell membrane. It catalyses the reaction a 1,2-diacyl-sn-glycero-3-phospho-L-serine + H(+) = a 1,2-diacyl-sn-glycero-3-phosphoethanolamine + CO2. It participates in phospholipid metabolism; phosphatidylethanolamine biosynthesis; phosphatidylethanolamine from CDP-diacylglycerol: step 2/2. Functionally, catalyzes the formation of phosphatidylethanolamine (PtdEtn) from phosphatidylserine (PtdSer). This is Phosphatidylserine decarboxylase proenzyme from Erwinia tasmaniensis (strain DSM 17950 / CFBP 7177 / CIP 109463 / NCPPB 4357 / Et1/99).